The following is a 685-amino-acid chain: Threonine--tRNA ligase (685 aa).

A TGS domain is found at 1 to 65 (MSTPASAAPA…DTDVEVEPVA (65 aa)). The catalytic stretch occupies residues 262 to 568 (DHRKLGSELD…LTEHYAGAFP (307 aa)). Zn(2+)-binding residues include Cys367, His418, and His545.

It belongs to the class-II aminoacyl-tRNA synthetase family. As to quaternary structure, homodimer. It depends on Zn(2+) as a cofactor.

The protein resides in the cytoplasm. The catalysed reaction is tRNA(Thr) + L-threonine + ATP = L-threonyl-tRNA(Thr) + AMP + diphosphate + H(+). Functionally, catalyzes the attachment of threonine to tRNA(Thr) in a two-step reaction: L-threonine is first activated by ATP to form Thr-AMP and then transferred to the acceptor end of tRNA(Thr). Also edits incorrectly charged L-seryl-tRNA(Thr). This chain is Threonine--tRNA ligase, found in Rhodococcus jostii (strain RHA1).